Reading from the N-terminus, the 360-residue chain is MVPAAGRRPPRVMRLLGWWQVLLWVLGLPVRGVEVAEESGRLWSEEQPAHPLQVGAVYLGEEELLHDPMGQDRAAEEANAVLGLDTQGDHMVMLSVIPGEAEDKVSSEPSGVTCGAGGAEDSRCNVRESLFSLDGAGAHFPDREEEYYTEPEVAESDAAPTEDSNNTESLKSPKVNCEERNITGLENFTLKILNMSQDLMDFLNPNGSDCTLVLFYTPWCRFSASLAPHFNSLPRAFPALHFLALDASQHSSLSTRFGTVAVPNILLFQGAKPMARFNHTDRTLETLKIFIFNQTGIEAKKNVVVTQADQIGPLPSTLIKSVDWLLVFSLFFLISFIMYATIRTESIRWLIPGQEQEHVE.

Positions 1–32 (MVPAAGRRPPRVMRLLGWWQVLLWVLGLPVRG) are cleaved as a signal peptide. Residues 33–321 (VEVAEESGRL…GPLPSTLIKS (289 aa)) are Extracellular-facing. Residues 141 to 173 (PDREEEYYTEPEVAESDAAPTEDSNNTESLKSP) form a disordered region. The span at 143-155 (REEEYYTEPEVAE) shows a compositional bias: acidic residues. Positions 153–296 (VAESDAAPTE…LKIFIFNQTG (144 aa)) constitute a Thioredoxin domain. N-linked (GlcNAc...) asparagine glycans are attached at residues Asn-187, Asn-194, Asn-206, and Asn-293. A helical membrane pass occupies residues 322 to 342 (VDWLLVFSLFFLISFIMYATI). Topologically, residues 343–360 (RTESIRWLIPGQEQEHVE) are cytoplasmic.

It localises to the cell projection. Its subcellular location is the cilium membrane. Its function is as follows. Acts as a positive regulator of ciliary hedgehog signaling. Involved in ciliogenesis. The protein is Thioredoxin domain-containing protein 15 (TXNDC15) of Homo sapiens (Human).